Reading from the N-terminus, the 157-residue chain is Homeobox protein DBX2 (157 aa).

The homeobox DNA-binding region spans 9 to 68; the sequence is GILRRAVFSEDQRKALEKMFQKQKYISKTDRKKLAINLGLKESQVKIWFQNRRMKWRNSK. Residues 105-157 form a disordered region; sequence SQEQTSPRWKEKSPGNSERLTSTQPPPRANSSQSPLYLYPDHDTANKAVTSSD. The segment covering 118 to 139 has biased composition (polar residues); sequence PGNSERLTSTQPPPRANSSQSP.

The protein belongs to the H2.0 homeobox family. In terms of tissue distribution, localized to the central nervous system during embryogenesis. It is found restricted to the rostro-caudal and dorso-ventral regions of the hindbrain. In the ventricular zone of the spinal cord, it localizes to the dorsal part of the basal plate. In the adult, it is detected in ovary.

It localises to the nucleus. Functionally, appears to perform a very early function in establishing the identity of a subset of cells that originate in the region of the ventricular zone in the developing spinal cord and in the hindbrain. The chain is Homeobox protein DBX2 (DBX2) from Gallus gallus (Chicken).